The sequence spans 144 residues: Kunitz-type elastase inhibitor BrEI (144 aa).

N-linked (GlcNAc...) asparagine glycosylation is present at Asn-38. A disulfide bridge connects residues Cys-41 and Cys-88.

The protein belongs to the leguminous Kunitz-type inhibitor family.

Functionally, inhibitor of porcine pancreatic elastase with a Ki of 27 nM. Does not inhibit human neutrophil elastase, bovine trypsin, human plasma kallikrein or porcine pancreatic kallikrein. The chain is Kunitz-type elastase inhibitor BrEI from Bauhinia rufa (Orchid tree).